Consider the following 87-residue polypeptide: Small ribosomal subunit protein uS17 (87 aa).

The protein belongs to the universal ribosomal protein uS17 family. Part of the 30S ribosomal subunit.

One of the primary rRNA binding proteins, it binds specifically to the 5'-end of 16S ribosomal RNA. This chain is Small ribosomal subunit protein uS17, found in Geobacillus sp. (strain WCH70).